The sequence spans 39 residues: Pro-opiomelanocortin (39 aa).

Met-13 carries the post-translational modification Methionine amide.

Belongs to the POMC family.

It localises to the secreted. Its function is as follows. Precursor protein for pituitary hormones that regulate stress and environmental adaptation. In terms of biological role, stimulates the adrenal glands to release cortisol. Functionally, anorexigenic peptide. Increases the pigmentation of skin by increasing melanin production in melanocytes. This Squalus acanthias (Spiny dogfish) protein is Pro-opiomelanocortin (pomc).